The chain runs to 137 residues: Urease subunit beta (137 aa).

Positions 113–137 are disordered; it reads NGHPNAGVKNDEGKQNANKESGDNR.

The protein belongs to the urease beta subunit family. Heterotrimer of UreA (gamma), UreB (beta) and UreC (alpha) subunits. Three heterotrimers associate to form the active enzyme.

The protein resides in the cytoplasm. It catalyses the reaction urea + 2 H2O + H(+) = hydrogencarbonate + 2 NH4(+). It participates in nitrogen metabolism; urea degradation; CO(2) and NH(3) from urea (urease route): step 1/1. The polypeptide is Urease subunit beta (Staphylococcus carnosus (strain TM300)).